The primary structure comprises 66 residues: Large ribosomal subunit protein bL35 (66 aa).

The protein belongs to the bacterial ribosomal protein bL35 family.

In Brucella anthropi (strain ATCC 49188 / DSM 6882 / CCUG 24695 / JCM 21032 / LMG 3331 / NBRC 15819 / NCTC 12168 / Alc 37) (Ochrobactrum anthropi), this protein is Large ribosomal subunit protein bL35.